A 140-amino-acid polypeptide reads, in one-letter code: Early nodulin-like protein 22 (140 aa).

A signal peptide spans 1-28; it reads MAQSSGHVSYVAVTVPIAIVMTVLCLFL. The region spanning 39-138 is the Phytocyanin domain; sequence TTYIVGGDDG…GLKMAIKALA (100 aa). A glycan (N-linked (GlcNAc...) asparagine) is linked at Asn-85. A disulfide bridge connects residues Cys-92 and Cys-126.

It belongs to the early nodulin-like (ENODL) family.

May act as a carbohydrate transporter. The polypeptide is Early nodulin-like protein 22 (Arabidopsis thaliana (Mouse-ear cress)).